The primary structure comprises 37 residues: Large ribosomal subunit protein bL36 (37 aa).

It belongs to the bacterial ribosomal protein bL36 family.

The chain is Large ribosomal subunit protein bL36 from Nitratidesulfovibrio vulgaris (strain ATCC 29579 / DSM 644 / CCUG 34227 / NCIMB 8303 / VKM B-1760 / Hildenborough) (Desulfovibrio vulgaris).